Reading from the N-terminus, the 402-residue chain is S-adenosylmethionine synthase (402 aa).

Residue histidine 17 coordinates ATP. Aspartate 19 contributes to the Mg(2+) binding site. Glutamate 45 lines the K(+) pocket. 2 residues coordinate L-methionine: glutamate 58 and glutamine 101. Residues glutamine 101 to glutamate 111 form a flexible loop region. Residues aspartate 177 to lysine 179, arginine 244 to phenylalanine 245, aspartate 253, arginine 259 to lysine 260, alanine 276, and lysine 280 contribute to the ATP site. Position 253 (aspartate 253) interacts with L-methionine. Position 284 (lysine 284) interacts with L-methionine.

The protein belongs to the AdoMet synthase family. Homotetramer; dimer of dimers. It depends on Mg(2+) as a cofactor. The cofactor is K(+).

Its subcellular location is the cytoplasm. The enzyme catalyses L-methionine + ATP + H2O = S-adenosyl-L-methionine + phosphate + diphosphate. It participates in amino-acid biosynthesis; S-adenosyl-L-methionine biosynthesis; S-adenosyl-L-methionine from L-methionine: step 1/1. Catalyzes the formation of S-adenosylmethionine (AdoMet) from methionine and ATP. The overall synthetic reaction is composed of two sequential steps, AdoMet formation and the subsequent tripolyphosphate hydrolysis which occurs prior to release of AdoMet from the enzyme. This chain is S-adenosylmethionine synthase, found in Lactobacillus johnsonii (strain CNCM I-12250 / La1 / NCC 533).